A 198-amino-acid polypeptide reads, in one-letter code: FMN-dependent NADH:quinone oxidoreductase (198 aa).

Residues Ser-10, 16-18 (SQS), 94-97 (MYNF), and 138-141 (TRGG) each bind FMN.

This sequence belongs to the azoreductase type 1 family. Homodimer. FMN is required as a cofactor.

It carries out the reaction 2 a quinone + NADH + H(+) = 2 a 1,4-benzosemiquinone + NAD(+). The enzyme catalyses N,N-dimethyl-1,4-phenylenediamine + anthranilate + 2 NAD(+) = 2-(4-dimethylaminophenyl)diazenylbenzoate + 2 NADH + 2 H(+). Its function is as follows. Quinone reductase that provides resistance to thiol-specific stress caused by electrophilic quinones. Also exhibits azoreductase activity. Catalyzes the reductive cleavage of the azo bond in aromatic azo compounds to the corresponding amines. This is FMN-dependent NADH:quinone oxidoreductase from Shewanella sp. (strain MR-4).